Here is a 202-residue protein sequence, read N- to C-terminus: Nucleoside triphosphate pyrophosphatase (202 aa).

Residue Asp-79 is the Proton acceptor of the active site.

The protein belongs to the Maf family. It depends on a divalent metal cation as a cofactor.

It localises to the cytoplasm. It carries out the reaction a ribonucleoside 5'-triphosphate + H2O = a ribonucleoside 5'-phosphate + diphosphate + H(+). The catalysed reaction is a 2'-deoxyribonucleoside 5'-triphosphate + H2O = a 2'-deoxyribonucleoside 5'-phosphate + diphosphate + H(+). In terms of biological role, nucleoside triphosphate pyrophosphatase. May have a dual role in cell division arrest and in preventing the incorporation of modified nucleotides into cellular nucleic acids. The protein is Nucleoside triphosphate pyrophosphatase of Rhodospirillum rubrum (strain ATCC 11170 / ATH 1.1.1 / DSM 467 / LMG 4362 / NCIMB 8255 / S1).